A 203-amino-acid polypeptide reads, in one-letter code: Small ribosomal subunit protein uS4 (203 aa).

Residues 93–156 enclose the S4 RNA-binding domain; the sequence is RRLDNVVYRL…MKVPAILEAV (64 aa).

Belongs to the universal ribosomal protein uS4 family. Part of the 30S ribosomal subunit. Contacts protein S5. The interaction surface between S4 and S5 is involved in control of translational fidelity.

Functionally, one of the primary rRNA binding proteins, it binds directly to 16S rRNA where it nucleates assembly of the body of the 30S subunit. With S5 and S12 plays an important role in translational accuracy. The chain is Small ribosomal subunit protein uS4 from Streptococcus agalactiae serotype Ia (strain ATCC 27591 / A909 / CDC SS700).